Reading from the N-terminus, the 162-residue chain is MGLETEKADVQLFLDDDSYSHHGDVDYADPEKFADSGHDRDPHRLNSHLKVGFEDVIAEPMTTHSCDKVWICSHALFEISKYVMYKFLTVFLAIPLAFAAGILFATLSCLHIWIIMPFVKTCLMVLPSVQTIWKSVTDVIIAPLCTSVGRSLSSISLQLSHD.

The Cytoplasmic portion of the chain corresponds to 1-86; the sequence is MGLETEKADV…FEISKYVMYK (86 aa). Tyrosine 19 carries the post-translational modification Phosphotyrosine; by SRC. Serine 20 carries the phosphoserine modification. A Phosphotyrosine; by SRC modification is found at tyrosine 27. Serine 36 is modified (phosphoserine). The segment at residues 87-107 is an intramembrane region (helical); that stretch reads FLTVFLAIPLAFAAGILFATL. The Cytoplasmic segment spans residues 108–162; it reads SCLHIWIIMPFVKTCLMVLPSVQTIWKSVTDVIIAPLCTSVGRSLSSISLQLSHD.

It belongs to the caveolin family. As to quaternary structure, monomer or homodimer. Interacts with CAV1; the interaction forms a stable heterooligomeric complex that is required for targeting to lipid rafts and for caveolae formation. Tyrosine phosphorylated forms do not form heterooligomers with the Tyr-19-phosphorylated form existing as a monomer or dimer, and the Tyr-27-form as a monomer only. Interacts (tyrosine phosphorylated form) with the SH2 domain-containing proteins, RASA1, NCK1 and SRC. Interacts (tyrosine phosphorylated form) with INSR, the interaction (Tyr-27-phosphorylated form) is increased on insulin stimulation. Interacts (Tyr-19 phosphorylated form) with MAPK1 (phosphorylated form); the interaction, promoted by insulin, leads to nuclear location and MAPK1 activation. Interacts with STAT3; the interaction is increased on insulin-induced tyrosine phosphorylation leading to STAT activation. Post-translationally, phosphorylated on serine and tyrosine residues. Phosphorylation on Ser-36 appears to modulate mitosis in endothelial cells. Phosphorylation on both Tyr-19 and Tyr-27 is required for insulin-induced 'Ser-727' phosphorylation of STAT3 and its activation. Phosphorylation on Tyr-19 is required for insulin-induced phosphorylation of MAPK1 and DNA binding of STAT3. Tyrosine phosphorylation is induced by both EGF and insulin.

The protein resides in the nucleus. It localises to the cytoplasm. It is found in the golgi apparatus membrane. The protein localises to the cell membrane. Its subcellular location is the membrane. The protein resides in the caveola. Its function is as follows. May act as a scaffolding protein within caveolar membranes. Interacts directly with G-protein alpha subunits and can functionally regulate their activity. Acts as an accessory protein in conjunction with CAV1 in targeting to lipid rafts and driving caveolae formation. The Ser-36 phosphorylated form has a role in modulating mitosis in endothelial cells. Positive regulator of cellular mitogenesis of the MAPK signaling pathway. Required for the insulin-stimulated nuclear translocation and activation of MAPK1 and STAT3, and the subsequent regulation of cell cycle progression. This chain is Caveolin-2 (CAV2), found in Eulemur macaco macaco (Black lemur).